Reading from the N-terminus, the 130-residue chain is Capsid protein (130 aa).

Residues 31-104 (EWLSNNSRSQ…FAATDDVTVI (74 aa)) form a viral RNA-binding region.

The protein belongs to the Leviviricetes capsid protein family. As to quaternary structure, homodimer. The capsid proteins form dimers that assemble by group of 5. Twelve such pentamers are linked together with free dimers. The homodimers binds to the viral RNA via an operator hairpin, but also to many other RNA sequences in the viral genome; this interaction probably shifts the virus from the replicative to the assembly phase and ensures specific encapsidation of the viral genome.

The protein resides in the virion. In terms of biological role, capsid protein self-assembles to form an icosahedral capsid with a T=3 symmetry, about 26 nm in diameter, and consisting of 89 capsid proteins dimers (178 capsid proteins). Involved in viral genome encapsidation through the interaction between a capsid protein dimer and the multiple packaging signals present in the RNA genome. The capsid also contains 1 copy of the A2 maturation protein. Acts as a translational repressor of viral replicase synthesis late in infection. This latter function is the result of capsid protein interaction with an RNA hairpin which contains the replicase ribosome-binding site. This chain is Capsid protein, found in Escherichia coli (Bacteriophage JP34).